The following is a 415-amino-acid chain: Transposase for insertion sequence element IS1081 (415 aa).

The protein belongs to the transposase mutator family.

In terms of biological role, required for the transposition of the insertion element. The sequence is that of Transposase for insertion sequence element IS1081 from Mycobacterium bovis (strain ATCC BAA-935 / AF2122/97).